A 95-amino-acid chain; its full sequence is Aspartyl/glutamyl-tRNA(Asn/Gln) amidotransferase subunit C (95 aa).

This sequence belongs to the GatC family. As to quaternary structure, heterotrimer of A, B and C subunits.

It catalyses the reaction L-glutamyl-tRNA(Gln) + L-glutamine + ATP + H2O = L-glutaminyl-tRNA(Gln) + L-glutamate + ADP + phosphate + H(+). The enzyme catalyses L-aspartyl-tRNA(Asn) + L-glutamine + ATP + H2O = L-asparaginyl-tRNA(Asn) + L-glutamate + ADP + phosphate + 2 H(+). Functionally, allows the formation of correctly charged Asn-tRNA(Asn) or Gln-tRNA(Gln) through the transamidation of misacylated Asp-tRNA(Asn) or Glu-tRNA(Gln) in organisms which lack either or both of asparaginyl-tRNA or glutaminyl-tRNA synthetases. The reaction takes place in the presence of glutamine and ATP through an activated phospho-Asp-tRNA(Asn) or phospho-Glu-tRNA(Gln). This Rhodospirillum rubrum (strain ATCC 11170 / ATH 1.1.1 / DSM 467 / LMG 4362 / NCIMB 8255 / S1) protein is Aspartyl/glutamyl-tRNA(Asn/Gln) amidotransferase subunit C.